The following is a 1051-amino-acid chain: Putative helicase/primase complex protein (1051 aa).

The protein belongs to the asfivirus F1055L family.

May be involved in DNA replication. The sequence is that of Putative helicase/primase complex protein from Ornithodoros (relapsing fever ticks).